A 402-amino-acid chain; its full sequence is Flavohemoprotein (402 aa).

The 136-residue stretch at 1–136 folds into the Globin domain; it reads MLSAKTIEIV…IADAFISIEA (136 aa). His85 contributes to the heme b binding site. Catalysis depends on charge relay system residues Tyr95 and Glu135. The interval 147 to 402 is reductase; the sequence is GGWKDFRNFV…EFFGPATSLQ (256 aa). The FAD-binding FR-type domain occupies 150–260; sequence KDFRNFVIVK…SAPAGDFVLN (111 aa). Residues Tyr188 and 204–207 contribute to the FAD site; that span reads RQYS. 273 to 278 contacts NADP(+); that stretch reads GVGITP. 394–397 provides a ligand contact to FAD; sequence FFGP.

It belongs to the globin family. Two-domain flavohemoproteins subfamily. This sequence in the C-terminal section; belongs to the flavoprotein pyridine nucleotide cytochrome reductase family. Heme b is required as a cofactor. FAD serves as cofactor.

It carries out the reaction 2 nitric oxide + NADPH + 2 O2 = 2 nitrate + NADP(+) + H(+). The catalysed reaction is 2 nitric oxide + NADH + 2 O2 = 2 nitrate + NAD(+) + H(+). Functionally, is involved in NO detoxification in an aerobic process, termed nitric oxide dioxygenase (NOD) reaction that utilizes O(2) and NAD(P)H to convert NO to nitrate, which protects the bacterium from various noxious nitrogen compounds. Therefore, plays a central role in the inducible response to nitrosative stress. The protein is Flavohemoprotein of Bacillus cereus (strain ATCC 14579 / DSM 31 / CCUG 7414 / JCM 2152 / NBRC 15305 / NCIMB 9373 / NCTC 2599 / NRRL B-3711).